The primary structure comprises 122 residues: Large ribosomal subunit protein uL22 (122 aa).

The protein belongs to the universal ribosomal protein uL22 family. In terms of assembly, part of the 50S ribosomal subunit.

In terms of biological role, this protein binds specifically to 23S rRNA; its binding is stimulated by other ribosomal proteins, e.g. L4, L17, and L20. It is important during the early stages of 50S assembly. It makes multiple contacts with different domains of the 23S rRNA in the assembled 50S subunit and ribosome. Its function is as follows. The globular domain of the protein is located near the polypeptide exit tunnel on the outside of the subunit, while an extended beta-hairpin is found that lines the wall of the exit tunnel in the center of the 70S ribosome. This Thermosynechococcus vestitus (strain NIES-2133 / IAM M-273 / BP-1) protein is Large ribosomal subunit protein uL22.